Reading from the N-terminus, the 462-residue chain is Argininosuccinate lyase (462 aa).

The protein belongs to the lyase 1 family. Argininosuccinate lyase subfamily.

The protein localises to the cytoplasm. It catalyses the reaction 2-(N(omega)-L-arginino)succinate = fumarate + L-arginine. It participates in amino-acid biosynthesis; L-arginine biosynthesis; L-arginine from L-ornithine and carbamoyl phosphate: step 3/3. The chain is Argininosuccinate lyase from Bacillus cytotoxicus (strain DSM 22905 / CIP 110041 / 391-98 / NVH 391-98).